We begin with the raw amino-acid sequence, 115 residues long: Protein V2 (115 aa).

It belongs to the geminiviridae protein AV2/V2 family. As to quaternary structure, interacts with host SGS3.

It is found in the host cytoplasm. The protein localises to the host perinuclear region. In terms of biological role, through its interaction with host SGS3, acts as a suppressor of RNA-mediated gene silencing, also known as post-transcriptional gene silencing (PTGS), a mechanism of plant viral defense that limits the accumulation of viral RNAs. The protein is Protein V2 of Cynanchum acutum (Little mallow).